Reading from the N-terminus, the 343-residue chain is MIHQSMTSNLSFYISSVSHLSSPLPSLSRLSLRCCSSLPAHDMETKPSQGLYPLHRCKTIHLVRHAQGIHNVEGEKNHKAYLSEDLFDAHLTPLGWQQVDNLHKHVNASGISNRIELVVVSPLLRTLQTAVGTFGGEGYKDGVNTPLLMTAGAGNSDRPAISRLNRPPFIAVESCREHLVCLLFYLLHDWHFLEMKTFAMFLVQGVHPCDRRSNITKYRELFPAIDFSLIETDEDVLWKPDIREEDKDIATRGVKFFNWLSTRKEKEIAVVTHSGFLYQTLNSFGNDCDPSVKNEISKKFVNCELRSFVLVDKCMSSSDPPMTNYPGTILTGEDASSDIADQK.

Residues 1 to 35 (MIHQSMTSNLSFYISSVSHLSSPLPSLSRLSLRCC) constitute a chloroplast transit peptide. His65 acts as the Tele-phosphohistidine intermediate in catalysis. Glu177 (proton donor/acceptor) is an active-site residue. The segment at 322–343 (MTNYPGTILTGEDASSDIADQK) is disordered.

The protein belongs to the phosphoglycerate mutase family.

It localises to the plastid. Its subcellular location is the chloroplast. Functionally, may play a role in carbohydrates metabolism. The sequence is that of Phosphoglycerate mutase-like protein 2 from Arabidopsis thaliana (Mouse-ear cress).